Consider the following 413-residue polypeptide: L-arginine-specific L-amino acid ligase (413 aa).

In terms of domain architecture, ATP-grasp spans Lys-115–Val-312. Gly-141–His-202 serves as a coordination point for ATP. 2 residues coordinate Mg(2+): Glu-268 and Glu-281. Residues Glu-268 and Glu-281 each coordinate Mn(2+).

As to quaternary structure, homodimer. Requires Mg(2+) as cofactor. It depends on Mn(2+) as a cofactor. The cofactor is Co(2+).

It catalyses the reaction an L-alpha-amino acid + L-arginine + ATP = L-arginyl-L-alpha-amino acid + ADP + phosphate + H(+). In terms of biological role, catalyzes the synthesis of Arg-Xaa dipeptides in an ATP-dependent manner. Has strict specificity toward arginine as the N-terminal substrate. The polypeptide is L-arginine-specific L-amino acid ligase (Bacillus subtilis).